Reading from the N-terminus, the 235-residue chain is Large ribosomal subunit protein uL1 (235 aa).

Belongs to the universal ribosomal protein uL1 family. In terms of assembly, part of the 50S ribosomal subunit.

Functionally, binds directly to 23S rRNA. The L1 stalk is quite mobile in the ribosome, and is involved in E site tRNA release. In terms of biological role, protein L1 is also a translational repressor protein, it controls the translation of the L11 operon by binding to its mRNA. The chain is Large ribosomal subunit protein uL1 from Parasynechococcus marenigrum (strain WH8102).